Here is a 471-residue protein sequence, read N- to C-terminus: Histone deacetylase 6 (471 aa).

N-acetylmethionine is present on Met-1. The histone deacetylase stretch occupies residues 20–333 (RVSYFYEPTI…WCYETAVAVG (314 aa)). The active-site Proton donor/acceptor is His-153. 3 residues coordinate Zn(2+): Asp-188, His-190, and Asp-276. The interval 389–471 (PSVQFQHTPP…PEPDVNPPSS (83 aa)) is disordered. Residues 453-463 (GEDEMDDDNPE) show a composition bias toward acidic residues.

Belongs to the histone deacetylase family. HD type 1 subfamily. In terms of assembly, interacts with Coi1, which functions in an SCF complex that recruits regulators for ubiquitination. Interacts with AHL22. Interacts with AS1. Part of the AS1 repressor complex composed of AS1, LBD6/AS2 and HDA6. Binds to EBS and SHL. Interacts with MBD6. Interacts with HDA5. Interacts with FLD. Zn(2+) is required as a cofactor. As to expression, not detected in leaves, stems, flowers and young siliques.

The protein localises to the nucleus. It is found in the nucleolus. The enzyme catalyses N(6)-acetyl-L-lysyl-[histone] + H2O = L-lysyl-[histone] + acetate. Inhibited by trichostatin A. In terms of biological role, responsible for the deacetylation of lysine residues on the N-terminal part of the core histones (H2A, H2B, H3 and H4). Might remove acetyl residues only from specific targets, such as rDNA repeats or complex transgenes. Histone deacetylation gives a tag for epigenetic repression and plays an important role in transcriptional regulation, cell cycle progression and developmental events. Histone deacetylases act via the formation of large multiprotein complexes. Required for rRNA gene silencing in nucleolar dominance. Plays a role in transgene silencing, but this effect seems to bee independent of the histone deacetylase activity. Part of the AS1 repressor complex to regulate the KNOX expression in leaf development. Binds to KNAT1, KNAT2, and KNATM chromatin. Involved in the regulation of flowering time. Forms a histone deacetylase complex with HDA5, FLD and MSI4/FVE that represses FLC gene expression to control flowering time. This is Histone deacetylase 6 from Arabidopsis thaliana (Mouse-ear cress).